We begin with the raw amino-acid sequence, 209 residues long: MADS-box transcription factor 2 (209 aa).

One can recognise an MADS-box domain in the interval 1–61; that stretch reads MGRGKIEIKR…GKLYDYCSPK (61 aa). Residues 84–170 form the K-box domain; the sequence is HKSLSAEIDR…AFKLHQQDIA (87 aa).

Highly expressed in anthers and carpels. Expressed in pollen, tapetum and stigma.

The protein resides in the nucleus. In terms of biological role, probable transcription factor involved in the development of floral organs. B-class protein required for normal development of lodicules (whorl 2). The chain is MADS-box transcription factor 2 (MADS2) from Oryza sativa subsp. japonica (Rice).